A 641-amino-acid chain; its full sequence is UPF0329 protein ECU11_0030 (641 aa).

The span at 358–387 (RQRKREEETERSVKELVGDEEKAKSKEEKA) shows a compositional bias: basic and acidic residues. Positions 358 to 444 (RQRKREEETE…KGGKKKSKGG (87 aa)) are disordered. The segment covering 435–444 (KGGKKKSKGG) has biased composition (basic residues).

Belongs to the UPF0329 family.

This is UPF0329 protein ECU11_0030 from Encephalitozoon cuniculi (strain GB-M1) (Microsporidian parasite).